We begin with the raw amino-acid sequence, 384 residues long: Putative glutamate--cysteine ligase 2 (384 aa).

The protein belongs to the glutamate--cysteine ligase type 2 family. YbdK subfamily.

It carries out the reaction L-cysteine + L-glutamate + ATP = gamma-L-glutamyl-L-cysteine + ADP + phosphate + H(+). Its function is as follows. ATP-dependent carboxylate-amine ligase which exhibits weak glutamate--cysteine ligase activity. The protein is Putative glutamate--cysteine ligase 2 of Ruegeria pomeroyi (strain ATCC 700808 / DSM 15171 / DSS-3) (Silicibacter pomeroyi).